The chain runs to 292 residues: Acetyl-coenzyme A carboxylase carboxyl transferase subunit beta (292 aa).

The 258-residue stretch at 35-292 (VFSQCEQCNS…LKLHAKKVTS (258 aa)) folds into the CoA carboxyltransferase N-terminal domain. Positions 39, 42, 58, and 61 each coordinate Zn(2+). A C4-type zinc finger spans residues 39–61 (CEQCNSAIYNKDLEHNYEVCPYC).

Belongs to the AccD/PCCB family. As to quaternary structure, acetyl-CoA carboxylase is a heterohexamer composed of biotin carboxyl carrier protein (AccB), biotin carboxylase (AccC) and two subunits each of ACCase subunit alpha (AccA) and ACCase subunit beta (AccD). It depends on Zn(2+) as a cofactor.

The protein resides in the cytoplasm. It carries out the reaction N(6)-carboxybiotinyl-L-lysyl-[protein] + acetyl-CoA = N(6)-biotinyl-L-lysyl-[protein] + malonyl-CoA. It functions in the pathway lipid metabolism; malonyl-CoA biosynthesis; malonyl-CoA from acetyl-CoA: step 1/1. Component of the acetyl coenzyme A carboxylase (ACC) complex. Biotin carboxylase (BC) catalyzes the carboxylation of biotin on its carrier protein (BCCP) and then the CO(2) group is transferred by the transcarboxylase to acetyl-CoA to form malonyl-CoA. In Acholeplasma laidlawii (strain PG-8A), this protein is Acetyl-coenzyme A carboxylase carboxyl transferase subunit beta.